Here is a 153-residue protein sequence, read N- to C-terminus: Ribonuclease H (153 aa).

Positions 4-145 (SVDSVELFTD…ADQLANRGVD (142 aa)) constitute an RNase H type-1 domain. Residues Asp-13, Glu-51, Asp-73, and Asp-137 each coordinate Mg(2+).

This sequence belongs to the RNase H family. As to quaternary structure, monomer. The cofactor is Mg(2+).

The protein localises to the cytoplasm. It carries out the reaction Endonucleolytic cleavage to 5'-phosphomonoester.. Its function is as follows. Endonuclease that specifically degrades the RNA of RNA-DNA hybrids. The sequence is that of Ribonuclease H from Pseudomonas fluorescens (strain Pf0-1).